The following is a 650-amino-acid chain: MTPQSLYKVPSDIAENALVNNDQYKKMYQESIINPEGFWREHGKRIDWIKPYTKIKKTSFDDHNLSINWFYDGTLNASANCLDRHLEEHGDKLAIIWEGDDANEQRKLTYAELHTQVCKFANALRSQGVNKGDIVTIYMPMVPEAAVAMLACARIGAVHSVVFGGFSPDSIAARVIDGKSKVLITADEGIRGGRKIPLKRSIDEAISNPDVTCVEKVIVFKRTGGDIDWVEGRDVWWHSLMEVASEFCQPAEMNAEDPLFLLYTSGSTGNPKGVLHTTGGYMVYASMTHEYVFDYKADEVYWCTADVGWITGHSYMVYGPFANAATVLIHEGVPNHPTPARLGEMIDRHKVNILYTAPTLIRALMAEGKEQFSSYKGDSLRIMGSVGEPINPEAWRWYHEVIGHENCPIVDTWWQTETGGILISPLPGATDTKPGSATRPFFGVQPALVDNMGDIVEGTGEGNLVILDSWPGQMRTVYGDHDRFALTYFKTFRGMYFTGDGARRDEDGYYWITGRVDDVINVSGHRLGTAEVESALVSHELVAEAAVVGYPHDIKGQGIYAYVTLTRGIEPTEELRQELRQWVRKEIGALATPDLIQWASGLPKTRSGKIMRRFLRKIAANEVTNLGDSSTLADPAVIDTLIESRLNKTE.

CoA-binding positions include 191 to 194 (RGGR), Thr-311, and Asn-335. Residues 387–389 (GEP), 411–416 (DTWWQT), Asp-500, and Arg-515 contribute to the ATP site. Residue Ser-523 participates in CoA binding. ATP is bound at residue Arg-526. Residues Val-537, His-539, and Val-542 each contribute to the Mg(2+) site. Arg-584 serves as a coordination point for CoA. Lys-609 is subject to N6-acetyllysine.

This sequence belongs to the ATP-dependent AMP-binding enzyme family. Mg(2+) serves as cofactor. Acetylated. Deacetylation by the SIR2-homolog deacetylase activates the enzyme.

The catalysed reaction is acetate + ATP + CoA = acetyl-CoA + AMP + diphosphate. Its function is as follows. Catalyzes the conversion of acetate into acetyl-CoA (AcCoA), an essential intermediate at the junction of anabolic and catabolic pathways. AcsA undergoes a two-step reaction. In the first half reaction, AcsA combines acetate with ATP to form acetyl-adenylate (AcAMP) intermediate. In the second half reaction, it can then transfer the acetyl group from AcAMP to the sulfhydryl group of CoA, forming the product AcCoA. In Shewanella frigidimarina (strain NCIMB 400), this protein is Acetyl-coenzyme A synthetase.